A 196-amino-acid chain; its full sequence is uncharacterized protein (196 aa).

Residues histidine 58 to asparagine 163 enclose the Bro-N domain.

This is an uncharacterized protein from Acanthamoeba polyphaga mimivirus (APMV).